A 233-amino-acid chain; its full sequence is Pyridoxal phosphate homeostasis protein (233 aa).

K35 carries the N6-(pyridoxal phosphate)lysine modification.

This sequence belongs to the pyridoxal phosphate-binding protein YggS/PROSC family.

Pyridoxal 5'-phosphate (PLP)-binding protein, which is involved in PLP homeostasis. The polypeptide is Pyridoxal phosphate homeostasis protein (Pasteurella multocida (strain Pm70)).